A 165-amino-acid chain; its full sequence is MTLSRNSHKEDQLEEKVLVVNRCCKVVKGGRKFSFSALILVGDRKGRLGFGFAKANELTDAIRKGGDAARKNLVSINSLEGGSIPHEVLVNHDGAELLLKPAKPGTGIVAGSRIRLILEMAGVKDIVAKSLGSNNPMNQVKAAFKALLTLSCKDDIMKRRAVIND.

One can recognise an S5 DRBM domain in the interval 13–76 (LEEKVLVVNR…DAARKNLVSI (64 aa)).

It belongs to the universal ribosomal protein uS5 family. As to quaternary structure, part of the 30S ribosomal subunit. Contacts proteins S4 and S8.

Its function is as follows. With S4 and S12 plays an important role in translational accuracy. In terms of biological role, located at the back of the 30S subunit body where it stabilizes the conformation of the head with respect to the body. The protein is Small ribosomal subunit protein uS5 of Chlamydia muridarum (strain MoPn / Nigg).